The sequence spans 592 residues: Probable oxidoreductase EphD (592 aa).

The AB hydrolase-1 domain occupies 30-286; the sequence is PTVVLVHGFP…KAGHFSPMSH (257 aa). Substrate is bound at residue S461. The active-site Proton acceptor is Y474.

It belongs to the short-chain dehydrogenases/reductases (SDR) family.

The sequence is that of Probable oxidoreductase EphD (ephD) from Mycobacterium bovis (strain ATCC BAA-935 / AF2122/97).